A 121-amino-acid chain; its full sequence is U15-barytoxin-Tl1b (121 aa).

The signal sequence occupies residues 1–16; sequence MKLFMVLVASFAFAVA. 4 disulfide bridges follow: Cys54-Cys72, Cys65-Cys78, Cys69-Cys119, and Cys71-Cys90.

Belongs to the neurotoxin 03 (Tx2) family. 03 subfamily. In terms of tissue distribution, expressed by the venom gland.

It is found in the secreted. Functionally, ion channel inhibitor. This is U15-barytoxin-Tl1b from Trittame loki (Brush-footed trapdoor spider).